An 83-amino-acid chain; its full sequence is Evasin P1124 (83 aa).

The signal sequence occupies residues 1–28 (MAVNVFTILQLAVFAAIVLNVNLHSVSA). Intrachain disulfides connect cysteine 48–cysteine 66, cysteine 52–cysteine 68, and cysteine 62–cysteine 79. Asparagine 51 carries N-linked (GlcNAc...) asparagine glycosylation.

It is found in the secreted. Its function is as follows. Salivary chemokine-binding protein which binds to host chemokines CXCL1, CXCL2, CXCL3, CXCL5, CXCL6, CXCL12 and CXCL13. This Ixodes ricinus (Common tick) protein is Evasin P1124.